The chain runs to 424 residues: UDP-N-acetylglucosamine 1-carboxyvinyltransferase (424 aa).

22-23 contacts phosphoenolpyruvate; it reads KN. Arginine 93 contacts UDP-N-acetyl-alpha-D-glucosamine. Cysteine 117 serves as the catalytic Proton donor. At cysteine 117 the chain carries 2-(S-cysteinyl)pyruvic acid O-phosphothioketal. UDP-N-acetyl-alpha-D-glucosamine is bound by residues 122-126, 162-165, aspartate 307, and isoleucine 329; these read RPVDL and KVSV.

The protein belongs to the EPSP synthase family. MurA subfamily.

The protein localises to the cytoplasm. The catalysed reaction is phosphoenolpyruvate + UDP-N-acetyl-alpha-D-glucosamine = UDP-N-acetyl-3-O-(1-carboxyvinyl)-alpha-D-glucosamine + phosphate. It functions in the pathway cell wall biogenesis; peptidoglycan biosynthesis. Functionally, cell wall formation. Adds enolpyruvyl to UDP-N-acetylglucosamine. This is UDP-N-acetylglucosamine 1-carboxyvinyltransferase from Haemophilus influenzae (strain PittGG).